Reading from the N-terminus, the 193-residue chain is Pyridoxal 5'-phosphate synthase subunit PdxT (193 aa).

48-50 (GES) contributes to the L-glutamine binding site. The active-site Nucleophile is Cys80. L-glutamine-binding positions include Arg109 and 137-138 (IR). Active-site charge relay system residues include His173 and Glu175.

The protein belongs to the glutaminase PdxT/SNO family. In terms of assembly, in the presence of PdxS, forms a dodecamer of heterodimers. Only shows activity in the heterodimer.

The catalysed reaction is aldehydo-D-ribose 5-phosphate + D-glyceraldehyde 3-phosphate + L-glutamine = pyridoxal 5'-phosphate + L-glutamate + phosphate + 3 H2O + H(+). It carries out the reaction L-glutamine + H2O = L-glutamate + NH4(+). The protein operates within cofactor biosynthesis; pyridoxal 5'-phosphate biosynthesis. Its function is as follows. Catalyzes the hydrolysis of glutamine to glutamate and ammonia as part of the biosynthesis of pyridoxal 5'-phosphate. The resulting ammonia molecule is channeled to the active site of PdxS. This is Pyridoxal 5'-phosphate synthase subunit PdxT from Mycobacteroides abscessus (strain ATCC 19977 / DSM 44196 / CCUG 20993 / CIP 104536 / JCM 13569 / NCTC 13031 / TMC 1543 / L948) (Mycobacterium abscessus).